The sequence spans 357 residues: DNA primase small subunit PriS (357 aa).

Residues aspartate 105, aspartate 107, and aspartate 259 contribute to the active site.

Belongs to the eukaryotic-type primase small subunit family. As to quaternary structure, heterodimer of a small subunit (PriS) and a large subunit (PriL). Mg(2+) is required as a cofactor. It depends on Mn(2+) as a cofactor.

In terms of biological role, catalytic subunit of DNA primase, an RNA polymerase that catalyzes the synthesis of short RNA molecules used as primers for DNA polymerase during DNA replication. The small subunit contains the primase catalytic core and has DNA synthesis activity on its own. Binding to the large subunit stabilizes and modulates the activity, increasing the rate of DNA synthesis while decreasing the length of the DNA fragments, and conferring RNA synthesis capability. The DNA polymerase activity may enable DNA primase to also catalyze primer extension after primer synthesis. May also play a role in DNA repair. The protein is DNA primase small subunit PriS of Methanococcus maripaludis (strain DSM 14266 / JCM 13030 / NBRC 101832 / S2 / LL).